The following is a 710-amino-acid chain: Polyribonucleotide nucleotidyltransferase (710 aa).

Residues D486 and D492 each contribute to the Mg(2+) site. One can recognise a KH domain in the interval 553-612; that stretch reads PRFETIKIHPDKIRDIIGKGGATIRSITEETNSSIDIDDDGTVKVYADDNEALQAALNRI. The S1 motif domain occupies 622–690; that stretch reads GAIYEGTVVR…QRGRIKLSIK (69 aa).

It belongs to the polyribonucleotide nucleotidyltransferase family. Component of the RNA degradosome, which is a multiprotein complex involved in RNA processing and mRNA degradation. It depends on Mg(2+) as a cofactor.

The protein resides in the cytoplasm. The catalysed reaction is RNA(n+1) + phosphate = RNA(n) + a ribonucleoside 5'-diphosphate. In terms of biological role, involved in mRNA degradation. Catalyzes the phosphorolysis of single-stranded polyribonucleotides processively in the 3'- to 5'-direction. The sequence is that of Polyribonucleotide nucleotidyltransferase from Cellvibrio japonicus (strain Ueda107) (Pseudomonas fluorescens subsp. cellulosa).